We begin with the raw amino-acid sequence, 278 residues long: UPF0758 protein BURPS1106A_0984 (278 aa).

A disordered region spans residues 1–64 (MQYEIVSAGE…ATAAARRGRD (64 aa)). Residues 22–59 (AAAPAAPSSAVPSSAALSSAALSSAAQPTGAPPATAAA) show a composition bias toward low complexity. Residues 156–278 (LVDSPGAVDD…TFSFAQAGWI (123 aa)) enclose the MPN domain. Zn(2+) is bound by residues histidine 227, histidine 229, and aspartate 240. Residues 227–240 (HNHPSGAVRPSAAD) carry the JAMM motif motif.

It belongs to the UPF0758 family.

This is UPF0758 protein BURPS1106A_0984 from Burkholderia pseudomallei (strain 1106a).